Here is a 232-residue protein sequence, read N- to C-terminus: Dehydrin DHN2 (232 aa).

Residues 1–12 (MSQYQNQYGAQT) show a composition bias toward polar residues. Disordered regions lie at residues 1 to 92 (MSQY…STNT), 131 to 156 (PGTE…SGGG), and 173 to 232 (PGDK…CTGH). Residues 73–82 (THTGGVGGYG) show a composition bias toward gly residues. A compositionally biased stretch (basic and acidic residues) spans 131–140 (PGTEQSRTHT). The span at 143–156 (TGYGSTGYGASGGG) shows a compositional bias: gly residues. The segment covering 200–223 (YVREEHRVDHGEKKGIMDKIKEKL) has biased composition (basic and acidic residues).

The protein belongs to the plant dehydrin family.

The chain is Dehydrin DHN2 (DHN2) from Pisum sativum (Garden pea).